The sequence spans 250 residues: ATP synthase subunit a (250 aa).

6 consecutive transmembrane segments (helical) span residues 29-49 (ASLFMAASAAVAVGFLYFATS), 84-104 (FFPLVFSLFMFVLTANLLGMF), 114-134 (IIVTFALAILVIGTVLVYGFY), 143-163 (VFVPSGVPGILLPLVVAIEII), 193-213 (FVASLGALGAVGVGGAVLPLI), and 216-236 (VALTGLEFLVAFLQAYVFAVL).

It belongs to the ATPase A chain family. F-type ATPases have 2 components, CF(1) - the catalytic core - and CF(0) - the membrane proton channel. CF(1) has five subunits: alpha(3), beta(3), gamma(1), delta(1), epsilon(1). CF(0) has three main subunits: a(1), b(2) and c(9-12). The alpha and beta chains form an alternating ring which encloses part of the gamma chain. CF(1) is attached to CF(0) by a central stalk formed by the gamma and epsilon chains, while a peripheral stalk is formed by the delta and b chains.

It localises to the cell inner membrane. In terms of biological role, key component of the proton channel; it plays a direct role in the translocation of protons across the membrane. This chain is ATP synthase subunit a, found in Rhizobium etli (strain CIAT 652).